A 78-amino-acid polypeptide reads, in one-letter code: Small ribosomal subunit protein bS18 (78 aa).

Belongs to the bacterial ribosomal protein bS18 family. In terms of assembly, part of the 30S ribosomal subunit. Forms a tight heterodimer with protein bS6.

Functionally, binds as a heterodimer with protein bS6 to the central domain of the 16S rRNA, where it helps stabilize the platform of the 30S subunit. The polypeptide is Small ribosomal subunit protein bS18 (Lactobacillus delbrueckii subsp. bulgaricus (strain ATCC 11842 / DSM 20081 / BCRC 10696 / JCM 1002 / NBRC 13953 / NCIMB 11778 / NCTC 12712 / WDCM 00102 / Lb 14)).